The chain runs to 389 residues: Cellobiose 2-epimerase (389 aa).

This sequence belongs to the cellobiose 2-epimerase family.

It is found in the cytoplasm. The enzyme catalyses D-cellobiose = beta-D-glucosyl-(1-&gt;4)-D-mannopyranose. Enhanced by Mg(2+) and Ca(2+) ions, ethylenediaminetetraacetic acid, ethylene glycol tetraacetic acid and citrate. Inhibited by Al(3+), Fe(3+), Co(2+), Cu(2+), Zn(2+), Pb(2+) and Ag(+) ions, iodoacetate, 4-chloromercuribenzoate and N-bromosuccinimide. In terms of biological role, catalyzes the reversible epimerization of cellobiose to 4-O-beta-D-glucopyranosyl-D-mannose (Glc-Man). Can also epimerize cellotriose to Glc-Glc-Man, cellotetraose to Glc-Glc-Glc-Man, and lactose to epilactose. This Ruminococcus albus protein is Cellobiose 2-epimerase (ce-ne1).